A 604-amino-acid chain; its full sequence is uncharacterized protein (604 aa).

Positions 239-259 are disordered; that stretch reads ELNSPQELNDPQELNNSQDLN.

This is an uncharacterized protein from Escherichia coli (strain K12).